The chain runs to 264 residues: Sulfur carrier protein FdhD (264 aa).

C107 functions as the Cysteine persulfide intermediate in the catalytic mechanism.

It belongs to the FdhD family.

Its subcellular location is the cytoplasm. Functionally, required for formate dehydrogenase (FDH) activity. Acts as a sulfur carrier protein that transfers sulfur from IscS to the molybdenum cofactor prior to its insertion into FDH. This is Sulfur carrier protein FdhD from Staphylococcus haemolyticus (strain JCSC1435).